The following is a 112-amino-acid chain: Inner membrane assembly complex subunit 17 (112 aa).

The N-terminal 24 residues, 1 to 24 (MLRKLPINFAKWTVKKVPVQQKRF), are a transit peptide targeting the mitochondrion. The Mitochondrial matrix segment spans residues 25–44 (NSQQKEISPHIMFYKNYARP). The chain crosses the membrane as a helical span at residues 45–62 (LGKVTLFALATYYGLEIV). The Mitochondrial intermembrane portion of the chain corresponds to 63-112 (WWKLDASEQEAIKNSKLLICESSFSLLTFRRITEFRECEIKTRDLYDPEI).

This sequence belongs to the INA17 family. In terms of assembly, component of the inner membrane assembly (INA) complex. Interacts with a subset of F(1)F(0)-ATP synthase subunits of the F(1)-domain and the peripheral stalk.

Its subcellular location is the mitochondrion inner membrane. Its function is as follows. Component of the INA complex (INAC) that promotes the biogenesis of mitochondrial F(1)F(0)-ATP synthase. INAC facilitates the assembly of the peripheral stalk and promotes the assembly of the catalytic F(1)-domain with the membrane-embedded F(0)-domain. This Schizosaccharomyces pombe (strain 972 / ATCC 24843) (Fission yeast) protein is Inner membrane assembly complex subunit 17.